Consider the following 307-residue polypeptide: UDP-3-O-acyl-N-acetylglucosamine deacetylase (307 aa).

3 residues coordinate Zn(2+): His78, His241, and Asp245. His268 serves as the catalytic Proton donor.

The protein belongs to the LpxC family. Zn(2+) is required as a cofactor.

The catalysed reaction is a UDP-3-O-[(3R)-3-hydroxyacyl]-N-acetyl-alpha-D-glucosamine + H2O = a UDP-3-O-[(3R)-3-hydroxyacyl]-alpha-D-glucosamine + acetate. It functions in the pathway glycolipid biosynthesis; lipid IV(A) biosynthesis; lipid IV(A) from (3R)-3-hydroxytetradecanoyl-[acyl-carrier-protein] and UDP-N-acetyl-alpha-D-glucosamine: step 2/6. Functionally, catalyzes the hydrolysis of UDP-3-O-myristoyl-N-acetylglucosamine to form UDP-3-O-myristoylglucosamine and acetate, the committed step in lipid A biosynthesis. The polypeptide is UDP-3-O-acyl-N-acetylglucosamine deacetylase (Bordetella bronchiseptica (strain ATCC BAA-588 / NCTC 13252 / RB50) (Alcaligenes bronchisepticus)).